The following is a 224-amino-acid chain: Pro-thyrotropin-releasing hormone-B (224 aa).

Residues 1-15 form the signal peptide; it reads MMFLWWLLLLGTAIS. Gln-75 carries the pyrrolidone carboxylic acid modification. Pro-77 is subject to Proline amide. Positions 86–101 are enriched in basic and acidic residues; it reads EKRQHPGKRDLEDLQL. 2 disordered regions span residues 86–131 and 150–212; these read EKRQ…DWSR and RQHP…NSGN. A Pyrrolidone carboxylic acid modification is found at Gln-89. Pro-91 is subject to Proline amide. Gln-105 carries the post-translational modification Pyrrolidone carboxylic acid. At Pro-107 the chain carries Proline amide. The span at 110–129 shows a compositional bias: basic and acidic residues; sequence RYLEDMEKRQHPGKREEGDW. Gln-119 carries the post-translational modification Pyrrolidone carboxylic acid. Proline amide is present on Pro-121. The residue at position 151 (Gln-151) is a Pyrrolidone carboxylic acid. Residue Pro-153 is modified to Proline amide. Gln-166 bears the Pyrrolidone carboxylic acid mark. Proline amide is present on Pro-168. Residues 182–199 show a composition bias toward basic and acidic residues; that stretch reads ENSKEVGKRQHPGKRYDP. Pyrrolidone carboxylic acid is present on Gln-191. The residue at position 193 (Pro-193) is a Proline amide.

It belongs to the TRH family.

The protein localises to the secreted. This chain is Pro-thyrotropin-releasing hormone-B (trh-b), found in Xenopus laevis (African clawed frog).